Here is a 275-residue protein sequence, read N- to C-terminus: Lectin (275 aa).

An N-terminal signal peptide occupies residues 1 to 30 (MASLQTQMISFYLIFLSILLTTIFFFKVNS). Positions 111 and 129 each coordinate D-glucose. 2 residues coordinate Mn(2+): Glu149 and Asp151. Positions 151, 153, 155, and 159 each coordinate Ca(2+). Positions 159 and 166 each coordinate Mn(2+). Positions 211–217 (NSLEEEN) are excised as a propeptide. D-glucose contacts are provided by Gly246 and Ala247. Positions 270 to 275 (KQAADA) are excised as a propeptide.

This sequence belongs to the leguminous lectin family. Heterotetramer of two alpha and two beta chains. The mature form consists of two chains, alpha and beta, produced by cleavage of the immature protein. These remain cleaved, yet fold together to form one subunit.

D-mannose specific lectin. This Lens culinaris subsp. tomentosus (Lentil) protein is Lectin.